Consider the following 153-residue polypeptide: UPF0260 protein CKO_01185 (153 aa).

It belongs to the UPF0260 family.

In Citrobacter koseri (strain ATCC BAA-895 / CDC 4225-83 / SGSC4696), this protein is UPF0260 protein CKO_01185.